Here is a 116-residue protein sequence, read N- to C-terminus: Iron-sulfur cluster insertion protein ErpA (116 aa).

Cysteine 44, cysteine 108, and cysteine 110 together coordinate iron-sulfur cluster.

It belongs to the HesB/IscA family. As to quaternary structure, homodimer. Iron-sulfur cluster serves as cofactor.

Functionally, required for insertion of 4Fe-4S clusters for at least IspG. The sequence is that of Iron-sulfur cluster insertion protein ErpA from Pseudomonas fluorescens (strain ATCC BAA-477 / NRRL B-23932 / Pf-5).